Here is a 353-residue protein sequence, read N- to C-terminus: D-alanine--D-alanine ligase (353 aa).

One can recognise an ATP-grasp domain in the interval 141–349 (KAAFAAAGLS…LPQLVAELVD (209 aa)). ATP is bound at residue 176–231 (EQELGYPCFVKPANLGSSVGITKANNRDELLAGLHQAAALDPRLLVEQGVNARELE). Mg(2+) contacts are provided by Asp-302, Glu-316, and Asn-318.

It belongs to the D-alanine--D-alanine ligase family. Mg(2+) is required as a cofactor. Requires Mn(2+) as cofactor.

Its subcellular location is the cytoplasm. The enzyme catalyses 2 D-alanine + ATP = D-alanyl-D-alanine + ADP + phosphate + H(+). The protein operates within cell wall biogenesis; peptidoglycan biosynthesis. In terms of biological role, cell wall formation. The protein is D-alanine--D-alanine ligase of Synechococcus sp. (strain WH7803).